Here is a 132-residue protein sequence, read N- to C-terminus: Antiholin (132 aa).

The Periplasmic segment spans residues 1-16 (MMNMIEWTKHVLESDD). 2 consecutive stretches face the cytoplasmic side: residues 1-61 (MMNM…ILIK) and 39-58 (VIARINPKEKFSSFKMKTGI). A helical transmembrane segment spans residues 17–38 (TKLIYWLTLLMVCMIVDTILGI). Residues 62–80 (VSEMIIALLAVPFALPFPA) form a helical membrane-spanning segment. Residues 81–85 (GLPLL) lie on the Periplasmic side of the membrane. The helical transmembrane segment at 86–107 (YTVYTALCVSEMYSIFGHLRVV) threads the bilayer. Residues 108-132 (DDKSNFLSIIEGFFKQTYRKDKGDK) are Cytoplasmic-facing.

The protein belongs to the bacteriophage holin family. phi29likevirus holin subfamily. In terms of assembly, homomultimer. Interacts with isoform Antiholin; this interaction blocks the holin homomultimerization and delays host cell lysis.

Its subcellular location is the host cell inner membrane. Its function is as follows. Accumulates harmlessly in the cytoplasmic membrane until it reaches a critical concentration that triggers the formation of micron-scale pores (holes) causing host cell membrane disruption and endolysin escape into the periplasmic space. Determines the precise timing of host cell lysis. Participates with the endolysin and spanin proteins in the sequential events which lead to the programmed host cell lysis releasing the mature viral particles from the host cell. Counteracts the aggregation of the holin molecules and thus of pore formation. The protein is Antiholin (14) of Bacillus phage B103 (Bacteriophage B103).